Reading from the N-terminus, the 205-residue chain is High frequency lysogenization protein HflD homolog (205 aa).

Belongs to the HflD family.

The protein localises to the cytoplasm. It localises to the cell inner membrane. The polypeptide is High frequency lysogenization protein HflD homolog (Haemophilus influenzae (strain ATCC 51907 / DSM 11121 / KW20 / Rd)).